Reading from the N-terminus, the 27-residue chain is Toxin TdII-4 (27 aa).

Residues 1 to 27 (KDGYLMEPNGCKLGCLTRPAKYCWXEE) enclose the LCN-type CS-alpha/beta domain.

This sequence belongs to the long (4 C-C) scorpion toxin superfamily. Sodium channel inhibitor family. Beta subfamily. In terms of tissue distribution, expressed by the venom gland.

It is found in the secreted. Functionally, beta toxins bind voltage-independently at site-4 of sodium channels (Nav) and shift the voltage of activation toward more negative potentials thereby affecting sodium channel activation and promoting spontaneous and repetitive firing. This toxin is active against mammals and also affects neuromuscular preparations of frog. In Tityus discrepans (Venezuelan scorpion), this protein is Toxin TdII-4.